Here is a 364-residue protein sequence, read N- to C-terminus: Succinate--CoA ligase [ADP-forming] subunit beta (364 aa).

Residues Lys-9–Lys-229 enclose the ATP-grasp domain. Residues Lys-43, Gly-50–Gly-52, Glu-89, Leu-92, and Glu-97 contribute to the ATP site. Mg(2+) contacts are provided by Asn-189 and Asp-203. Residues Asn-246 and Gly-303 to Thr-305 contribute to the substrate site.

The protein belongs to the succinate/malate CoA ligase beta subunit family. Heterotetramer of two alpha and two beta subunits. Mg(2+) is required as a cofactor.

The catalysed reaction is succinate + ATP + CoA = succinyl-CoA + ADP + phosphate. It catalyses the reaction GTP + succinate + CoA = succinyl-CoA + GDP + phosphate. It participates in carbohydrate metabolism; tricarboxylic acid cycle; succinate from succinyl-CoA (ligase route): step 1/1. In terms of biological role, succinyl-CoA synthetase functions in the citric acid cycle (TCA), coupling the hydrolysis of succinyl-CoA to the synthesis of either ATP or GTP and thus represents the only step of substrate-level phosphorylation in the TCA. The beta subunit provides nucleotide specificity of the enzyme and binds the substrate succinate, while the binding sites for coenzyme A and phosphate are found in the alpha subunit. In Methanocaldococcus jannaschii (strain ATCC 43067 / DSM 2661 / JAL-1 / JCM 10045 / NBRC 100440) (Methanococcus jannaschii), this protein is Succinate--CoA ligase [ADP-forming] subunit beta.